The primary structure comprises 438 residues: GTPase Der (438 aa).

EngA-type G domains lie at 4-168 (PIVA…PEGN) and 177-352 (IRIA…GNYC). GTP contacts are provided by residues 10–17 (GRPNVGKS), 57–61 (DTGGI), 120–123 (NKID), 183–190 (GRPNVGKS), 230–234 (DTAGL), and 295–298 (NKWD). In terms of domain architecture, KH-like spans 353–437 (KRIKTGILND…GIKLEFRERK (85 aa)).

It belongs to the TRAFAC class TrmE-Era-EngA-EngB-Septin-like GTPase superfamily. EngA (Der) GTPase family. As to quaternary structure, associates with the 50S ribosomal subunit.

In terms of biological role, GTPase that plays an essential role in the late steps of ribosome biogenesis. This Clostridium novyi (strain NT) protein is GTPase Der.